The sequence spans 330 residues: D-lactate dehydrogenase (330 aa).

NAD(+) contacts are provided by residues 155–156, Asp175, 206–207, Asn212, 233–235, and Asp259; these read RI, MP, and MAR. Residue Arg235 is part of the active site. Glu264 is a catalytic residue. Catalysis depends on His296, which acts as the Proton donor.

It belongs to the D-isomer specific 2-hydroxyacid dehydrogenase family.

It catalyses the reaction (R)-lactate + NAD(+) = pyruvate + NADH + H(+). In Streptococcus pyogenes serotype M1, this protein is D-lactate dehydrogenase (ldhD).